The chain runs to 825 residues: Neuroligin-3 (825 aa).

The signal sequence occupies residues 1–34 (MWLQPSLSLSPTPTVGRSLCLTLGFLSLVLRAST). At 35 to 686 (QAPAPTVNTH…NPRDYSTELS (652 aa)) the chain is on the extracellular side. The N-linked (GlcNAc...) asparagine glycan is linked to N95. A disulfide bond links C103 and C138. The interval 151–172 (SGAKKQGEDLADNDGDEDEDIR) is disordered. Residues 159 to 171 (DLADNDGDEDEDI) show a composition bias toward acidic residues. 2 cysteine pairs are disulfide-bonded: C317/C328 and C487/C521. A glycan (N-linked (GlcNAc...) asparagine) is linked at N522. Composition is skewed to polar residues over residues 622–633 (TKVPPPDTTHSS) and 654–666 (AYSN…SWNG). The segment at 622-668 (TKVPPPDTTHSSHITRRPNGKTWSTKRPAISPAYSNENAPGSWNGDQ) is disordered. The helical transmembrane segment at 687-707 (VTIAVGASLLFLNVLAFAALY) threads the bilayer. At 708–825 (YRKDKRRQEP…LPHSHSTTRV (118 aa)) the chain is on the cytoplasmic side. S722 is modified (phosphoserine). The residue at position 769 (Y769) is a Phosphotyrosine.

It belongs to the type-B carboxylesterase/lipase family. Homodimer, and heterodimer with NLGN1 and NLGN2. Interacts with neurexins NRXN1, NRXN2 and NRXN3. Interaction with neurexins is mediated by heparan sulfate glycan modification on neurexin. Interacts (via its C-terminus) with DLG4/PSD-95 (via PDZ domain 3). Brain and arteries (at protein level). Detected in heart, brain, spleen, lung, liver, skeletal muscle, kidney and testis. Expressed in olfactory bulb and olfactory epithelium. Found in olfactory ensheathing glia but not in olfactory neurons, and in developing peripheral glia.

It localises to the cell membrane. Its subcellular location is the synapse. In terms of biological role, cell surface protein involved in cell-cell-interactions via its interactions with neurexin family members. Plays a role in synapse function and synaptic signal transmission, and probably mediates its effects by recruiting and clustering other synaptic proteins. May promote the initial formation of synapses, but is not essential for this. May also play a role in glia-glia or glia-neuron interactions in the developing peripheral nervous system. The chain is Neuroligin-3 (Nlgn3) from Mus musculus (Mouse).